Here is a 221-residue protein sequence, read N- to C-terminus: NIP3 homolog (221 aa).

The tract at residues 24 to 55 (GEKTDESVQPQQQTEQSSAQQTTPSAKAVSNP) is disordered. K26 participates in a covalent cross-link: Glycyl lysine isopeptide (Lys-Gly) (interchain with G-Cter in ubiquitin). Positions 32–49 (QPQQQTEQSSAQQTTPSA) are enriched in low complexity. Residues 189 to 209 (VVFGFLVTNIFSFVVGAAVGF) form a helical membrane-spanning segment. A required for initiation of apoptosis region spans residues 189 to 209 (VVFGFLVTNIFSFVVGAAVGF).

This sequence belongs to the NIP3 family. In terms of assembly, homodimer; via transmembrane domain. Interacts with ced-3 and ced-9. Post-translationally, ubiquitinated and degraded by the proteasome. Under oxidative stress conditions, ubiquitinated at Lys-26 in a pink-1 dependent manner. Colocalizes with pdr-1 and may be ubiquitinated by it. In terms of tissue distribution, expressed in all somatic tissues including neurons, pharynx, intestine, body wall muscles and vulva muscles.

The protein resides in the mitochondrion outer membrane. Functionally, initiates apoptosis in a BH3-independent mechanism possibly by recruiting ced-3 to mitochondria and other cytoplasmic membranes. Has a role in lifespan and tumor growth. Required for the induction of mitophagy under stress conditions. This Caenorhabditis elegans protein is NIP3 homolog.